Consider the following 433-residue polypeptide: Probable M18 family aminopeptidase 2 (433 aa).

3 residues coordinate Zn(2+): His84, His161, and His409.

This sequence belongs to the peptidase M18 family. It depends on Zn(2+) as a cofactor.

The polypeptide is Probable M18 family aminopeptidase 2 (Clostridium novyi (strain NT)).